The primary structure comprises 96 residues: Large ribosomal subunit protein eL21 (96 aa).

Belongs to the eukaryotic ribosomal protein eL21 family.

The polypeptide is Large ribosomal subunit protein eL21 (Methanoregula boonei (strain DSM 21154 / JCM 14090 / 6A8)).